Reading from the N-terminus, the 311-residue chain is Aspartate carbamoyltransferase catalytic subunit (311 aa).

Positions 55 and 56 each coordinate carbamoyl phosphate. Lys-85 contributes to the L-aspartate binding site. Residues Arg-106, His-135, and Gln-138 each coordinate carbamoyl phosphate. Residues Arg-168 and Arg-230 each coordinate L-aspartate. Carbamoyl phosphate contacts are provided by Leu-268 and Pro-269.

It belongs to the aspartate/ornithine carbamoyltransferase superfamily. ATCase family. In terms of assembly, heterododecamer (2C3:3R2) of six catalytic PyrB chains organized as two trimers (C3), and six regulatory PyrI chains organized as three dimers (R2).

It carries out the reaction carbamoyl phosphate + L-aspartate = N-carbamoyl-L-aspartate + phosphate + H(+). It participates in pyrimidine metabolism; UMP biosynthesis via de novo pathway; (S)-dihydroorotate from bicarbonate: step 2/3. Functionally, catalyzes the condensation of carbamoyl phosphate and aspartate to form carbamoyl aspartate and inorganic phosphate, the committed step in the de novo pyrimidine nucleotide biosynthesis pathway. The chain is Aspartate carbamoyltransferase catalytic subunit from Klebsiella pneumoniae (strain 342).